The following is a 418-amino-acid chain: Cell division protein FtsA (418 aa).

It belongs to the FtsA/MreB family. As to quaternary structure, self-interacts. Interacts with FtsZ.

Its subcellular location is the cell inner membrane. In terms of biological role, cell division protein that is involved in the assembly of the Z ring. May serve as a membrane anchor for the Z ring. This is Cell division protein FtsA from Buchnera aphidicola subsp. Acyrthosiphon pisum (strain APS) (Acyrthosiphon pisum symbiotic bacterium).